A 94-amino-acid polypeptide reads, in one-letter code: Co-chaperonin GroES (94 aa).

The protein belongs to the GroES chaperonin family. Heptamer of 7 subunits arranged in a ring. Interacts with the chaperonin GroEL.

It is found in the cytoplasm. Together with the chaperonin GroEL, plays an essential role in assisting protein folding. The GroEL-GroES system forms a nano-cage that allows encapsulation of the non-native substrate proteins and provides a physical environment optimized to promote and accelerate protein folding. GroES binds to the apical surface of the GroEL ring, thereby capping the opening of the GroEL channel. This Clostridium botulinum (strain Eklund 17B / Type B) protein is Co-chaperonin GroES.